Consider the following 245-residue polypeptide: Farnesol dehydrogenase (245 aa).

NAD(+) is bound by residues 11-40 (VTGA…ARRV) and Asp-64. Ser-145 is a binding site for substrate. Catalysis depends on Tyr-160, which acts as the Proton acceptor. NAD(+) is bound at residue Lys-164.

This sequence belongs to the short-chain dehydrogenases/reductases (SDR) family. Homodimer. As to expression, highly expressed level in the midgut and brain in adult females, and at lower level in the abdominal and thoracic ganglia. High levels are detected in corpora allata (CA), Malpighian tubules and fat body.

The catalysed reaction is (2E,6E)-farnesol + NADP(+) = (2E,6E)-farnesal + NADPH + H(+). Mediates oxidation of farnesol into farnesal, a precursor of juvenile hormone in the corpora allata (CA), the glands that synthesize juvenile hormone. Able to oxidize C(10) to C(15) isoprenoid and aliphatic alcohols. This is Farnesol dehydrogenase from Aedes aegypti (Yellowfever mosquito).